The chain runs to 268 residues: Proliferating cell nuclear antigen (268 aa).

The DNA-binding element occupies 61–80 (RCDRNPSMGMNLNNMAKMLK).

It belongs to the PCNA family.

Its subcellular location is the nucleus. This protein is an auxiliary protein of DNA polymerase delta and is involved in the control of eukaryotic DNA replication by increasing the polymerase's processibility during elongation of the leading strand. The sequence is that of Proliferating cell nuclear antigen from Catharanthus roseus (Madagascar periwinkle).